Consider the following 509-residue polypeptide: MRLSPVFVALLSGLLAADLGLARSVAPRVADSPAAVTGTRKTSLLKNVAGLPPVPSAAQVAATSLNTDDIQGDILVGMHKQKQLFYFFAINDPATFKTHLASDIAPVVASVTQLSNVATQPLVALNIAFSNTGLLALGVTDNLGDSLFANGQAKDATSFKESTSSWVPQFAGTGIHGVIILASDTTDLIDQQVASIESTFGSSISKLYSLSASIRPGNEAGHEMFGFLDGIAQPAINGFNTPLPGQNIVDAGVIITGATNDPITRPSWAVGGSFLAFRQLEQLVPEFNKYLLDNAPAGSGSLQARADLLGARMVGRWKSGAPIDLTPTADDPALGADAQRNNNFTYSHAGFDLGSDQSHCPFSAHIRKTRPRADLGGSLTPPNLSAGANSIMRSGIPYGPEVTSAESASNTTTQERGLAFVAYQAQLSQGFHFLQQTWADNANFPPGKTPATVGLDPIIGQNNGQPRVVNGLLPSNSSASLSIPQFVVSHGGEYFFSPPISAIGGRLSA.

The N-terminal stretch at 1-22 is a signal peptide; sequence MRLSPVFVALLSGLLAADLGLA. Positions 23–61 are excised as a propeptide; it reads RSVAPRVADSPAAVTGTRKTSLLKNVAGLPPVPSAAQVA. Residue D229 is the Proton acceptor of the active site. An N-linked (GlcNAc...) asparagine glycan is attached at N343. Position 365 (H365) interacts with heme. Residues N383, N410, and N476 are each glycosylated (N-linked (GlcNAc...) asparagine).

This sequence belongs to the DyP-type peroxidase family. Heme b serves as cofactor.

Its subcellular location is the secreted. It carries out the reaction Reactive Blue 5 + 2 H2O2 = 2,2'-disulfonyl azobenzene + 3-[(4-amino-6-chloro-1,3,5-triazin-2-yl)amino]benzenesulfonate + phthalate + 2 H2O + 2 H(+). It catalyses the reaction 2 a phenolic donor + H2O2 = 2 a phenolic radical donor + 2 H2O. Its activity is regulated as follows. Inhibited by imidazole. Functionally, manganese-independent peroxidase that is able to convert a large number of compounds, but its physiological substrate is not known. In addition to classic peroxidase substrates (e.g. 2,6-dimethoxyphenol), oxidizes dyes such as Reactive Blue 5 and Reactive Black 5. The polypeptide is Dye-decolorizing peroxidase AauDyP1 (Auricularia auricula-judae (Judas ear fungus)).